The chain runs to 162 residues: Nucleotide-binding protein Adeh_0094 (162 aa).

This sequence belongs to the YajQ family.

Functionally, nucleotide-binding protein. The sequence is that of Nucleotide-binding protein Adeh_0094 from Anaeromyxobacter dehalogenans (strain 2CP-C).